The sequence spans 330 residues: Intraflagellar transport protein 46 homolog (330 aa).

Disordered regions lie at residues 1 to 21 (MDRPYDETVDIPDSEDIATPR) and 55 to 112 (SIKT…EGVY). Positions 7–16 (ETVDIPDSED) are enriched in acidic residues. The span at 68 to 79 (SSSEKLCDRGSS) shows a compositional bias: basic and acidic residues. Acidic residues predominate over residues 80–101 (DDDDDDDNDDDEDEDDDDDDEN).

Belongs to the IFT46 family.

The protein resides in the cytoplasm. The protein localises to the cytoskeleton. It is found in the cilium basal body. It localises to the cell projection. Its subcellular location is the cilium. Its function is as follows. Forms part of a complex involved in intraflagellar transport (IFT), the bi-directional movement of particles required for the assembly, maintenance and functioning of primary cilia. This Schistosoma japonicum (Blood fluke) protein is Intraflagellar transport protein 46 homolog.